The following is a 72-amino-acid chain: Translation initiation factor IF-1 (72 aa).

The region spanning 1 to 72 (MAKDDVIEVE…TRGRITYRYK (72 aa)) is the S1-like domain. Residue tyrosine 60 is modified to Phosphotyrosine.

This sequence belongs to the IF-1 family. As to quaternary structure, component of the 30S ribosomal translation pre-initiation complex which assembles on the 30S ribosome in the order IF-2 and IF-3, IF-1 and N-formylmethionyl-tRNA(fMet); mRNA recruitment can occur at any time during PIC assembly.

It is found in the cytoplasm. In terms of biological role, one of the essential components for the initiation of protein synthesis. Stabilizes the binding of IF-2 and IF-3 on the 30S subunit to which N-formylmethionyl-tRNA(fMet) subsequently binds. Helps modulate mRNA selection, yielding the 30S pre-initiation complex (PIC). Upon addition of the 50S ribosomal subunit IF-1, IF-2 and IF-3 are released leaving the mature 70S translation initiation complex. The polypeptide is Translation initiation factor IF-1 (Geobacillus thermodenitrificans (strain NG80-2)).